The chain runs to 305 residues: Spermatogenesis-associated protein 4 (305 aa).

The region spanning 49–155 (SRLSRSVLRW…EEVYTLLTHR (107 aa)) is the Calponin-homology (CH) domain.

Its subcellular location is the nucleus. May play a role in apoptosis regulation. The protein is Spermatogenesis-associated protein 4 (SPATA4) of Pan troglodytes (Chimpanzee).